Here is a 265-residue protein sequence, read N- to C-terminus: Mycothiol acetyltransferase (265 aa).

N-acetyltransferase domains lie at 1–110 (MDDL…PPLP) and 118–265 (VSVR…YVRG). Asp3 contributes to the 1D-myo-inositol 2-(L-cysteinylamino)-2-deoxy-alpha-D-glucopyranoside binding site. 44–46 (VQV) provides a ligand contact to acetyl-CoA. 1D-myo-inositol 2-(L-cysteinylamino)-2-deoxy-alpha-D-glucopyranoside contacts are provided by Glu145, Arg185, and Glu198. Residues 202–204 (LGV) and 209–215 (HCKGLGK) contribute to the acetyl-CoA site. Tyr236 is a 1D-myo-inositol 2-(L-cysteinylamino)-2-deoxy-alpha-D-glucopyranoside binding site.

It belongs to the acetyltransferase family. MshD subfamily. Monomer.

The catalysed reaction is 1D-myo-inositol 2-(L-cysteinylamino)-2-deoxy-alpha-D-glucopyranoside + acetyl-CoA = mycothiol + CoA + H(+). Its function is as follows. Catalyzes the transfer of acetyl from acetyl-CoA to desacetylmycothiol (Cys-GlcN-Ins) to form mycothiol. The polypeptide is Mycothiol acetyltransferase (Segniliparus rotundus (strain ATCC BAA-972 / CDC 1076 / CIP 108378 / DSM 44985 / JCM 13578)).